A 398-amino-acid polypeptide reads, in one-letter code: tRNA pseudouridine synthase D (398 aa).

Catalysis depends on aspartate 76, which acts as the Nucleophile. The TRUD domain occupies 151 to 360; it reads GVPNFFGEQR…MPGERRPLRI (210 aa).

It belongs to the pseudouridine synthase TruD family.

It catalyses the reaction uridine(13) in tRNA = pseudouridine(13) in tRNA. Its function is as follows. Responsible for synthesis of pseudouridine from uracil-13 in transfer RNAs. In Syntrophotalea carbinolica (strain DSM 2380 / NBRC 103641 / GraBd1) (Pelobacter carbinolicus), this protein is tRNA pseudouridine synthase D.